The sequence spans 408 residues: Histidine--tRNA ligase (408 aa).

This sequence belongs to the class-II aminoacyl-tRNA synthetase family. In terms of assembly, homodimer.

It localises to the cytoplasm. The catalysed reaction is tRNA(His) + L-histidine + ATP = L-histidyl-tRNA(His) + AMP + diphosphate + H(+). In Campylobacter jejuni subsp. jejuni serotype O:23/36 (strain 81-176), this protein is Histidine--tRNA ligase.